The chain runs to 107 residues: UPF0122 protein BLi01817/BL02321 (107 aa).

It belongs to the UPF0122 family.

Might take part in the signal recognition particle (SRP) pathway. This is inferred from the conservation of its genetic proximity to ftsY/ffh. May be a regulatory protein. This Bacillus licheniformis (strain ATCC 14580 / DSM 13 / JCM 2505 / CCUG 7422 / NBRC 12200 / NCIMB 9375 / NCTC 10341 / NRRL NRS-1264 / Gibson 46) protein is UPF0122 protein BLi01817/BL02321.